The sequence spans 142 residues: Ribosome-binding factor A (142 aa).

Positions 119-142 (EAKQKQHGVETDAEQGDTKEEGDK) are disordered.

It belongs to the RbfA family. Monomer. Binds 30S ribosomal subunits, but not 50S ribosomal subunits or 70S ribosomes.

The protein localises to the cytoplasm. In terms of biological role, one of several proteins that assist in the late maturation steps of the functional core of the 30S ribosomal subunit. Associates with free 30S ribosomal subunits (but not with 30S subunits that are part of 70S ribosomes or polysomes). Required for efficient processing of 16S rRNA. May interact with the 5'-terminal helix region of 16S rRNA. The protein is Ribosome-binding factor A of Shewanella pealeana (strain ATCC 700345 / ANG-SQ1).